The chain runs to 31 residues: U14-ctenitoxin-Co1a (31 aa).

Disulfide bonds are present. In terms of tissue distribution, expressed by the venom gland.

Its subcellular location is the secreted. Omega-agatoxins are antagonists of voltage-gated calcium channels (Cav). In Ctenus ornatus (Brazilian spider), this protein is U14-ctenitoxin-Co1a.